Reading from the N-terminus, the 284-residue chain is Bifunctional protein FolD (284 aa).

NADP(+)-binding positions include 163–165 (GRS), Ser188, and Ile229.

It belongs to the tetrahydrofolate dehydrogenase/cyclohydrolase family. In terms of assembly, homodimer.

It carries out the reaction (6R)-5,10-methylene-5,6,7,8-tetrahydrofolate + NADP(+) = (6R)-5,10-methenyltetrahydrofolate + NADPH. The enzyme catalyses (6R)-5,10-methenyltetrahydrofolate + H2O = (6R)-10-formyltetrahydrofolate + H(+). Its pathway is one-carbon metabolism; tetrahydrofolate interconversion. In terms of biological role, catalyzes the oxidation of 5,10-methylenetetrahydrofolate to 5,10-methenyltetrahydrofolate and then the hydrolysis of 5,10-methenyltetrahydrofolate to 10-formyltetrahydrofolate. The sequence is that of Bifunctional protein FolD from Campylobacter hominis (strain ATCC BAA-381 / DSM 21671 / CCUG 45161 / LMG 19568 / NCTC 13146 / CH001A).